Here is a 118-residue protein sequence, read N- to C-terminus: Small ribosomal subunit protein uS13 (118 aa).

The segment at 93-118 is disordered; that stretch reads RSLPVRGQRSKTNARTRKGPRKPIKK.

Belongs to the universal ribosomal protein uS13 family. In terms of assembly, part of the 30S ribosomal subunit. Forms a loose heterodimer with protein S19. Forms two bridges to the 50S subunit in the 70S ribosome.

Its function is as follows. Located at the top of the head of the 30S subunit, it contacts several helices of the 16S rRNA. In the 70S ribosome it contacts the 23S rRNA (bridge B1a) and protein L5 of the 50S subunit (bridge B1b), connecting the 2 subunits; these bridges are implicated in subunit movement. Contacts the tRNAs in the A and P-sites. In Teredinibacter turnerae (strain ATCC 39867 / T7901), this protein is Small ribosomal subunit protein uS13.